Reading from the N-terminus, the 313-residue chain is Ribosomal RNA small subunit methyltransferase H (313 aa).

S-adenosyl-L-methionine is bound by residues 31–33 (GGH), D51, F77, D95, and Q102.

Belongs to the methyltransferase superfamily. RsmH family.

Its subcellular location is the cytoplasm. The catalysed reaction is cytidine(1402) in 16S rRNA + S-adenosyl-L-methionine = N(4)-methylcytidine(1402) in 16S rRNA + S-adenosyl-L-homocysteine + H(+). In terms of biological role, specifically methylates the N4 position of cytidine in position 1402 (C1402) of 16S rRNA. The sequence is that of Ribosomal RNA small subunit methyltransferase H from Xylella fastidiosa (strain M12).